The chain runs to 771 residues: Tubulin monoglycylase TTLL3 (771 aa).

A disordered region spans residues 70–106; that stretch reads PRPSFSQPRRHDHETETTDEGDSSDEDDLGEEVERDD. The span at 86–106 shows a compositional bias: acidic residues; that stretch reads TTDEGDSSDEDDLGEEVERDD. The region spanning 220-566 is the TTL domain; that stretch reads EGEKMGEVHN…RRSERNTDTG (347 aa). Residues K339, 345-346, 377-380, 390-392, and 434-435 each bind ATP; these read RG, QKYI, KFD, and CN. R345 is an a protein binding site. S437 contacts L-glutamate. Mg(2+) is bound by residues D512, E525, and N527. Residue E525 participates in ATP binding. Disordered stretches follow at residues 605-640 and 682-713; these read LIQS…EEVK and TELH…PTLY. A compositionally biased stretch (polar residues) spans 614–633; the sequence is SKSTNHKSSLLSSPCTSGKE.

Mg(2+) serves as cofactor.

It is found in the cytoplasm. It localises to the cytoskeleton. Its subcellular location is the cell projection. The protein localises to the cilium. The protein resides in the cilium axoneme. It is found in the flagellum axoneme. The catalysed reaction is L-glutamyl-[protein] + glycine + ATP = glycyl-L-glutamyl-[protein] + ADP + phosphate + H(+). In terms of biological role, monoglycylase which modifies alpha- and beta-tubulin, adding a single glycine on the gamma-carboxyl groups of specific glutamate residues to generate monoglycine side chains within the C-terminal tail of tubulin. Not involved in elongation step of the polyglycylation reaction. Preferentially glycylates a beta-tail peptide over the alpha-tail, although shifts its preference toward alpha-tail as beta-tail glutamylation increases. Competes with polyglutamylases for modification site on beta-tubulin substrate, thereby creating an anticorrelation between glycylation and glutamylation reactions. Not involved in elongation step of the polyglycylation reaction. This is Tubulin monoglycylase TTLL3 (ttll3) from Danio rerio (Zebrafish).